The sequence spans 80 residues: Exodeoxyribonuclease 7 small subunit (80 aa).

The protein belongs to the XseB family. As to quaternary structure, heterooligomer composed of large and small subunits.

It localises to the cytoplasm. The catalysed reaction is Exonucleolytic cleavage in either 5'- to 3'- or 3'- to 5'-direction to yield nucleoside 5'-phosphates.. Its function is as follows. Bidirectionally degrades single-stranded DNA into large acid-insoluble oligonucleotides, which are then degraded further into small acid-soluble oligonucleotides. The sequence is that of Exodeoxyribonuclease 7 small subunit from Rickettsia akari (strain Hartford).